The following is a 188-amino-acid chain: dCTP deaminase (188 aa).

DCTP is bound by residues 111–116, 135–137, glutamine 156, tyrosine 170, and glutamine 180; these read KSTYAR and TLE. The Proton donor/acceptor role is filled by glutamate 137.

This sequence belongs to the dCTP deaminase family. In terms of assembly, homotrimer.

It catalyses the reaction dCTP + H2O + H(+) = dUTP + NH4(+). The protein operates within pyrimidine metabolism; dUMP biosynthesis; dUMP from dCTP (dUTP route): step 1/2. Catalyzes the deamination of dCTP to dUTP. The sequence is that of dCTP deaminase from Nitrosococcus oceani (strain ATCC 19707 / BCRC 17464 / JCM 30415 / NCIMB 11848 / C-107).